Here is a 115-residue protein sequence, read N- to C-terminus: MHQQHSKSENKPQQQRKKFEGPKREAILDLAKYKDSKIRVKLMGGKLVIGVLKGYDQLMNLVLDDTVEYMSNPDDENNTELISKNARKLGLTVIRGTILVSLSSAEGSDVLYMQK.

Residues 1–10 (MHQQHSKSEN) show a composition bias toward basic and acidic residues. Positions 1–23 (MHQQHSKSENKPQQQRKKFEGPK) are disordered. Positions 25-108 (EAILDLAKYK…LVSLSSAEGS (84 aa)) constitute a Sm domain.

The protein belongs to the snRNP Sm proteins family. As to quaternary structure, component of the heptameric LSM1-LSM7 complex that forms a seven-membered ring structure with a donut shape. The LSm subunits are arranged in the order LSM1, LSM2, LSM3, LSM6, LSM5, LSM7 and LSM4. Except for LSM1, where a C-terminal helix crosses the ring structure to form additional interactions with LSM3 and LSM6, each subunit interacts only with its two neighboring subunits. The LSM1-LSM7 complex interacts with PAT1; within the complex PAT1 has direct interactions with LSM2 and LSM3. The LSM1-LSM7 complex interacts with XRN1. Component of the heptameric LSM2-LSM8 complex that forms a seven-membered ring structure with a donut shape; an RNA strand can pass through the hole in the center of the ring structure. The LSm subunits are arranged in the order LSM8, LSM2, LSM3, LSM6, LSM5, LSM7 and LSM4. Component of the spliceosome U4/U6-U5 tri-snRNP complex composed of the U4, U6 and U5 snRNAs and at least PRP3, PRP4, PRP6, PRP8, PRP18, PRP31, PRP38, SNU13, SNU23, SNU66, SNU114, SPP381, SMB1, SMD1, SMD2, SMD3, SMX2, SMX3, LSM2, LSM3, LSM4, LSM5, LSM6, LSM7, LSM8, BRR2 and DIB1. May be found in a complex comprising LSM2-LSM7 without LSM1 or LSM8; the complex associates with pre-P RNA and snoRNA SNR5.

It localises to the nucleus. Its subcellular location is the nucleolus. It is found in the cytoplasm. Its function is as follows. Component of LSm protein complexes, which are involved in RNA processing and may function in a chaperone-like manner. Component of the cytoplasmic LSM1-LSM7 complex which is involved in mRNA degradation by activating the decapping step. Together with PAT1, the LSM1-LSM7 complex binds to osmotic stress-activated mRNAs to attenuate the osmotic stress response, probably by limiting ribosome access to the mRNA and consequently translation. Component of the nuclear LSM2-LSM8 complex, which is involved in spliceosome assembly. The LSM2-LSM8 complex plays a role in the biogenesis of the spliceosomal U4/U6-U5 tri-snRNP complex by accelerating PRP24-mediated annealing of U4/U6 di-snRNA. The LSM2-LSM8 complex binds U6 snRNA terminating with a non-cyclic 3' phosphate group. LSM2-LSM8 is probably also involved in degradation of nuclear pre-mRNA by targeting them for decapping. LSM2-LSM8 could be involved in processing of pre-tRNAs, pre-rRNAs and U3 snoRNA, although involvement may be indirect. In a complex that probably contains LSM2-LSM7, but not LSM1 or LSM8, associates with the precursor of the RNA component of RNase P (pre-P RNA) and may be involved in maturing pre-P RNA; the complex also associates with snoRNA SNR5. The chain is LSM complex subunit LSM7 (LSM7) from Saccharomyces cerevisiae (strain ATCC 204508 / S288c) (Baker's yeast).